Here is a 99-residue protein sequence, read N- to C-terminus: Small ribosomal subunit protein uS14m (99 aa).

The protein belongs to the universal ribosomal protein uS14 family.

Its subcellular location is the mitochondrion. The protein is Small ribosomal subunit protein uS14m (RPS14) of Marchantia polymorpha (Common liverwort).